Here is a 368-residue protein sequence, read N- to C-terminus: mRNA export factor (368 aa).

Residues 1–37 are disordered; that stretch reads MSLFSTPGGFGTGGGSMFGSTATDNHNPMKDIEVTSP. Residues 8-17 are compositionally biased toward gly residues; that stretch reads GGFGTGGGSM. 7 WD repeats span residues 37 to 79, 84 to 114, 125 to 157, 168 to 206, 215 to 255, 271 to 301, and 310 to 346; these read PPDD…QTIP, MHTG…KMWD, QHDA…KFWD, QLPE…EFRR, HRCV…KDNF, QDIY…SFWD, and TSEQ…EFYN.

It belongs to the WD repeat rae1 family.

The protein localises to the cytoplasm. The protein resides in the nucleus. It localises to the cytoskeleton. It is found in the spindle pole. Plays a role in mitotic bipolar spindle formation. Binds mRNA. May function in nucleocytoplasmic transport and in directly or indirectly attaching cytoplasmic mRNPs to the cytoskeleton. The protein is mRNA export factor (rae1) of Xenopus tropicalis (Western clawed frog).